The sequence spans 133 residues: MLHVHILSWVLAIILFIATYLNYSKTQGASPYYKPLHMALRLFMLLTLISGFWELIEEFMAASNGEGGNHMLLTLKMLCGLAVIAFMEISIAKRKKQQTSHKFFWITIILIIITMAIGVILPWGPISKIFGIS.

4 consecutive transmembrane segments (helical) span residues 1–21 (MLHV…ATYL), 42–62 (LFML…FMAA), 71–91 (MLLT…EISI), and 103–123 (FFWI…ILPW).

It belongs to the UPF0344 family.

It localises to the cell membrane. The chain is UPF0344 protein SE_0666 from Staphylococcus epidermidis (strain ATCC 12228 / FDA PCI 1200).